A 1035-amino-acid polypeptide reads, in one-letter code: Integrin alpha-9 (1035 aa).

The first 29 residues, 1–29, serve as a signal peptide directing secretion; sequence MGGPAAPRGAGRLRALLLALVVAGIPAGA. The Extracellular portion of the chain corresponds to 30–981; the sequence is YNLDPQRPVH…LEPRGYVVGW (952 aa). FG-GAP repeat units lie at residues 35–96, 111–174, 182–232, 233–289, 290–349, 351–408, and 411–474; these read QRPV…PDRR, SCGK…AKGR, EYKK…NTYL, KLND…SGTL, IKIF…GALE, QLAL…GIVP, and SMKL…LPGS. 3 cysteine pairs are disulfide-bonded: Cys87–Cys97, Cys142–Cys162, and Cys179–Cys194. A glycan (N-linked (GlcNAc...) asparagine) is linked at Asn225. 12 residues coordinate Ca(2+): Asp312, Asn314, Asp316, Asp320, Asp373, Asp375, Asp377, Asp381, Asp435, Asp437, Asn439, and Asp443. An N-linked (GlcNAc...) asparagine glycan is attached at Asn476. A disulfide bridge links Cys482 with Cys491. Asn493 is a glycosylation site (N-linked (GlcNAc...) asparagine). Residues Cys497 and Cys555 are joined by a disulfide bond. Residue Asn612 is glycosylated (N-linked (GlcNAc...) asparagine). The cysteines at positions 620 and 625 are disulfide-linked. 4 N-linked (GlcNAc...) asparagine glycosylation sites follow: Asn654, Asn658, Asn672, and Asn676. Cys696 and Cys706 are disulfide-bonded. Residues Asn807 and Asn854 are each glycosylated (N-linked (GlcNAc...) asparagine). Cystine bridges form between Cys855–Cys891 and Cys898–Cys903. Asn904 carries an N-linked (GlcNAc...) asparagine glycan. A helical membrane pass occupies residues 982–1002; the sequence is IIAISLLVGILIFLLLAVLLW. The Cytoplasmic portion of the chain corresponds to 1003 to 1035; sequence KMGFFRRRYKEIIEAEKNRKENEDSWDWVQKNQ. The GFFKR motif motif lies at 1005–1009; it reads GFFRR.

The protein belongs to the integrin alpha chain family. In terms of assembly, heterodimer of an alpha and a beta subunit. Alpha-9 (ITGA9) associates with beta-1 (ITGB1). Integrin ITGA9:ITGB1 interacts with FBLN5 (via N-terminus). Integrin ITGA9:ITGB1 interacts with SPP1/OPN (via N-terminus). Integrin ITGA9:ITGB1 interacts with TNC/TNFN3 (via the 3rd Fibronectin type-III domain). Integrin ITGA9:ITGB1 interacts with SVEP1/polydom (via Sushi domain 21); thereby inhibits Ca(2+) intracellular signaling and as a result represses vasocontraction. In terms of tissue distribution, expressed in vascular smooth muscle cells (at protein level). Expressed in the airway epithelium (at protein level).

It is found in the membrane. Its function is as follows. Integrin alpha-9/beta-1 (ITGA9:ITGB1) is a receptor for VCAM1, cytotactin and osteopontin. It recognizes the sequence A-E-I-D-G-I-E-L in cytotactin. ITGA9:ITGB1 may play a crucial role in SVEP1/polydom-mediated myoblast cell adhesion. Integrin ITGA9:ITGB1 represses PRKCA-mediated L-type voltage-gated channel Ca(2+) influx and ROCK-mediated calcium sensitivity in vascular smooth muscle cells via its interaction with SVEP1, thereby inhibiting vasocontraction. This chain is Integrin alpha-9 (ITGA9), found in Homo sapiens (Human).